Consider the following 335-residue polypeptide: tRNA N6-adenosine threonylcarbamoyltransferase (335 aa).

His-111 and His-115 together coordinate Fe cation. Substrate is bound by residues 133-137, Asp-166, Gly-179, and Asn-276; that span reads LISGG. Asp-301 is a Fe cation binding site.

Belongs to the KAE1 / TsaD family. Fe(2+) serves as cofactor.

It is found in the cytoplasm. The enzyme catalyses L-threonylcarbamoyladenylate + adenosine(37) in tRNA = N(6)-L-threonylcarbamoyladenosine(37) in tRNA + AMP + H(+). In terms of biological role, required for the formation of a threonylcarbamoyl group on adenosine at position 37 (t(6)A37) in tRNAs that read codons beginning with adenine. Is involved in the transfer of the threonylcarbamoyl moiety of threonylcarbamoyl-AMP (TC-AMP) to the N6 group of A37, together with TsaE and TsaB. TsaD likely plays a direct catalytic role in this reaction. The sequence is that of tRNA N6-adenosine threonylcarbamoyltransferase from Wolbachia pipientis wMel.